The following is a 246-amino-acid chain: Eukaryotic translation initiation factor 6 (246 aa).

A phosphoserine; by CK1 mark is found at Ser-174 and Ser-175.

It belongs to the eIF-6 family. Monomer. Associates with the 60S ribosomal subunit. Phosphorylation at Ser-174 and Ser-175 promotes nuclear export.

The protein resides in the cytoplasm. The protein localises to the nucleus. It localises to the nucleolus. Binds to the 60S ribosomal subunit and prevents its association with the 40S ribosomal subunit to form the 80S initiation complex in the cytoplasm. Is also involved in ribosome biogenesis. Associates with pre-60S subunits in the nucleus and is involved in its nuclear export. This is Eukaryotic translation initiation factor 6 (tif-6) from Neurospora crassa (strain ATCC 24698 / 74-OR23-1A / CBS 708.71 / DSM 1257 / FGSC 987).